A 205-amino-acid chain; its full sequence is Small ribosomal subunit protein uS4c (205 aa).

In terms of domain architecture, S4 RNA-binding spans Met93 to Gln154.

The protein belongs to the universal ribosomal protein uS4 family. Part of the 30S ribosomal subunit. Contacts protein S5. The interaction surface between S4 and S5 is involved in control of translational fidelity.

The protein localises to the plastid. The protein resides in the chloroplast. Functionally, one of the primary rRNA binding proteins, it binds directly to 16S rRNA where it nucleates assembly of the body of the 30S subunit. Its function is as follows. With S5 and S12 plays an important role in translational accuracy. This chain is Small ribosomal subunit protein uS4c (rps4), found in Chaetosphaeridium globosum (Charophycean green alga).